The sequence spans 152 residues: SsrA-binding protein (152 aa).

Positions 132–142 (REAIKKRDVSD) are enriched in basic and acidic residues. Positions 132–152 (REAIKKRDVSDQIRSSLRRSR) are disordered.

It belongs to the SmpB family.

The protein resides in the cytoplasm. In terms of biological role, required for rescue of stalled ribosomes mediated by trans-translation. Binds to transfer-messenger RNA (tmRNA), required for stable association of tmRNA with ribosomes. tmRNA and SmpB together mimic tRNA shape, replacing the anticodon stem-loop with SmpB. tmRNA is encoded by the ssrA gene; the 2 termini fold to resemble tRNA(Ala) and it encodes a 'tag peptide', a short internal open reading frame. During trans-translation Ala-aminoacylated tmRNA acts like a tRNA, entering the A-site of stalled ribosomes, displacing the stalled mRNA. The ribosome then switches to translate the ORF on the tmRNA; the nascent peptide is terminated with the 'tag peptide' encoded by the tmRNA and targeted for degradation. The ribosome is freed to recommence translation, which seems to be the essential function of trans-translation. The polypeptide is SsrA-binding protein (Bdellovibrio bacteriovorus (strain ATCC 15356 / DSM 50701 / NCIMB 9529 / HD100)).